A 660-amino-acid polypeptide reads, in one-letter code: Bifunctional polymyxin resistance protein ArnA (660 aa).

Residues 1–304 form a formyltransferase ArnAFT region; that stretch reads MKAVIFAYHD…TLGLVAGARL (304 aa). Histidine 104 functions as the Proton donor; for formyltransferase activity in the catalytic mechanism. Residues arginine 114 and 136 to 140 contribute to the (6R)-10-formyltetrahydrofolate site; that span reads VKRAD. The interval 314–660 is dehydrogenase ArnADH; the sequence is RRIRVLILGV…RSVDVAERAS (347 aa). NAD(+) is bound by residues aspartate 347 and 368 to 369; that span reads DI. UDP-alpha-D-glucuronate-binding positions include alanine 393, tyrosine 398, and 432-433; that span reads TS. The active-site Proton acceptor; for decarboxylase activity is the glutamate 434. UDP-alpha-D-glucuronate contacts are provided by residues arginine 460, asparagine 492, 526–535, and tyrosine 613; that span reads KLIDGGQQKR. Residue arginine 619 is the Proton donor; for decarboxylase activity of the active site.

It in the N-terminal section; belongs to the Fmt family. UDP-L-Ara4N formyltransferase subfamily. In the C-terminal section; belongs to the NAD(P)-dependent epimerase/dehydratase family. UDP-glucuronic acid decarboxylase subfamily. Homohexamer, formed by a dimer of trimers.

It carries out the reaction UDP-alpha-D-glucuronate + NAD(+) = UDP-beta-L-threo-pentopyranos-4-ulose + CO2 + NADH. The catalysed reaction is UDP-4-amino-4-deoxy-beta-L-arabinose + (6R)-10-formyltetrahydrofolate = UDP-4-deoxy-4-formamido-beta-L-arabinose + (6S)-5,6,7,8-tetrahydrofolate + H(+). It functions in the pathway nucleotide-sugar biosynthesis; UDP-4-deoxy-4-formamido-beta-L-arabinose biosynthesis; UDP-4-deoxy-4-formamido-beta-L-arabinose from UDP-alpha-D-glucuronate: step 1/3. The protein operates within nucleotide-sugar biosynthesis; UDP-4-deoxy-4-formamido-beta-L-arabinose biosynthesis; UDP-4-deoxy-4-formamido-beta-L-arabinose from UDP-alpha-D-glucuronate: step 3/3. It participates in bacterial outer membrane biogenesis; lipopolysaccharide biosynthesis. In terms of biological role, bifunctional enzyme that catalyzes the oxidative decarboxylation of UDP-glucuronic acid (UDP-GlcUA) to UDP-4-keto-arabinose (UDP-Ara4O) and the addition of a formyl group to UDP-4-amino-4-deoxy-L-arabinose (UDP-L-Ara4N) to form UDP-L-4-formamido-arabinose (UDP-L-Ara4FN). The modified arabinose is attached to lipid A and is required for resistance to polymyxin and cationic antimicrobial peptides. The polypeptide is Bifunctional polymyxin resistance protein ArnA (Salmonella dublin (strain CT_02021853)).